The following is a 187-amino-acid chain: Probable chorismate pyruvate-lyase (187 aa).

Positions 80, 117, and 176 each coordinate substrate.

It belongs to the UbiC family.

Its subcellular location is the cytoplasm. It catalyses the reaction chorismate = 4-hydroxybenzoate + pyruvate. It functions in the pathway cofactor biosynthesis; ubiquinone biosynthesis. Its function is as follows. Removes the pyruvyl group from chorismate, with concomitant aromatization of the ring, to provide 4-hydroxybenzoate (4HB) for the ubiquinone pathway. The chain is Probable chorismate pyruvate-lyase from Halorhodospira halophila (strain DSM 244 / SL1) (Ectothiorhodospira halophila (strain DSM 244 / SL1)).